Reading from the N-terminus, the 771-residue chain is Hyperosmolality-gated Ca2+ permeable channel 1.3 (771 aa).

A helical membrane pass occupies residues 7-27 (IGVAAAINILTAIIFLLAFAI). At S54 the chain carries Phosphoserine. Transmembrane regions (helical) follow at residues 101–121 (IYLIGLKIFVPIALLAWSILV), 158–178 (FWTHLVMAYAFTFWTCYVLMK), 375–395 (LIMHIAFFFLTFFFMIPIAFV), 427–447 (FLPGIVLKLFLIFLPSILMVM), 467–487 (YYIFNLINVFLGSVITGSAFE), 512–532 (ATFFITYIMVDGWAGIAGEIL), 584–604 (PVTPVLLPFIIIFFALAYLVF), 630–650 (IISALIIAQILLMGLLSTKGA), and 651–671 (AQSTPFLLFLPIITFFFHRYC). Positions 744 to 771 (VPTKRQSRINTPAVSHASRGSSRSPPSK) are disordered. Positions 751 to 771 (RINTPAVSHASRGSSRSPPSK) are enriched in polar residues.

The protein belongs to the CSC1 (TC 1.A.17) family. In terms of processing, phosphorylated at Ser-54 by BIK1 in response to pathogen-associated molecular pattern (PAMP) perception, promoting its activation. In terms of tissue distribution, preferentially expressed in guard cells.

The protein localises to the cell membrane. The enzyme catalyses Ca(2+)(in) = Ca(2+)(out). With respect to regulation, activated following phosphorylation at Ser-54 by BIK1. In terms of biological role, calcium-permeable channel that plays a key role in plant stomatal immunity. In response to pathogen-associated molecular pattern (PAMP) perception, phosphorylated and activated by BIK1, triggering rapid influx of calcium ions across the plasma membrane, leading to stomatal closure. In Arabidopsis thaliana (Mouse-ear cress), this protein is Hyperosmolality-gated Ca2+ permeable channel 1.3.